A 534-amino-acid chain; its full sequence is Ankyrin repeat and LEM domain-containing protein 1 (534 aa).

4 ANK repeats span residues 4-35, 39-71, 75-104, and 108-137; these read TACL…DPNL, DGAA…DPNA, EGLT…DPTL, and DGLR…PTQP. The LEM domain occupies 279-323; that stretch reads HSSVPPMSDLQLLQALRALGYSPGPVTPFTRGHYLRRLQEAQASR. A GIY-YIG domain is found at 370 to 485; sequence KSSFTYLLLD…ALGLQTLTNQ (116 aa). The short motif at 498–505 is the Nuclear localization signal element; it reads PPSRRRRL.

In terms of assembly, interacts (via LEM domain) with BANF1; the interaction may favor BANF1 dimerization. As to expression, predominantly expressed in bone marrow, spleen, thymus, colon and ovary. Expressed also to a lesser extent in lymph nodes, liver and testis.

The protein resides in the cytoplasm. It is found in the nucleus. Functionally, endonuclease that probably plays a role in the DNA damage response and DNA repair. This Mus musculus (Mouse) protein is Ankyrin repeat and LEM domain-containing protein 1.